We begin with the raw amino-acid sequence, 365 residues long: Elongation factor Tu (365 aa).

Residues 1 to 7, 62 to 66, and 117 to 120 each bind GTP; these read HVDHGKT, DCPGH, and NKCD. Residues 1-185 enclose the tr-type G domain; that stretch reads HVDHGKTTLT…TLDSYIPTPE (185 aa). A Mg(2+)-binding site is contributed by Thr-7.

The protein belongs to the TRAFAC class translation factor GTPase superfamily. Classic translation factor GTPase family. EF-Tu/EF-1A subfamily. Monomer.

The protein localises to the cytoplasm. It catalyses the reaction GTP + H2O = GDP + phosphate + H(+). In terms of biological role, GTP hydrolase that promotes the GTP-dependent binding of aminoacyl-tRNA to the A-site of ribosomes during protein biosynthesis. This is Elongation factor Tu from Buchnera aphidicola subsp. Schlechtendalia chinensis.